Here is a 607-residue protein sequence, read N- to C-terminus: 1-deoxy-D-xylulose-5-phosphate synthase (607 aa).

Thiamine diphosphate contacts are provided by residues His63 and 104 to 106; that span reads GHS. Asp135 contributes to the Mg(2+) binding site. Thiamine diphosphate is bound by residues 136 to 137, Asn164, Tyr271, and Glu351; that span reads GA. Residue Asn164 coordinates Mg(2+).

This sequence belongs to the transketolase family. DXPS subfamily. In terms of assembly, homodimer. Mg(2+) serves as cofactor. The cofactor is thiamine diphosphate.

The catalysed reaction is D-glyceraldehyde 3-phosphate + pyruvate + H(+) = 1-deoxy-D-xylulose 5-phosphate + CO2. Its pathway is metabolic intermediate biosynthesis; 1-deoxy-D-xylulose 5-phosphate biosynthesis; 1-deoxy-D-xylulose 5-phosphate from D-glyceraldehyde 3-phosphate and pyruvate: step 1/1. Functionally, catalyzes the acyloin condensation reaction between C atoms 2 and 3 of pyruvate and glyceraldehyde 3-phosphate to yield 1-deoxy-D-xylulose-5-phosphate (DXP). The polypeptide is 1-deoxy-D-xylulose-5-phosphate synthase (Campylobacter hominis (strain ATCC BAA-381 / DSM 21671 / CCUG 45161 / LMG 19568 / NCTC 13146 / CH001A)).